The chain runs to 424 residues: UDP-N-acetylglucosamine 1-carboxyvinyltransferase (424 aa).

22 to 23 (KN) serves as a coordination point for phosphoenolpyruvate. Residue Arg-98 participates in UDP-N-acetyl-alpha-D-glucosamine binding. Cys-122 functions as the Proton donor in the catalytic mechanism. Cys-122 bears the 2-(S-cysteinyl)pyruvic acid O-phosphothioketal mark. Residues 127–131 (RPVDQ), Asp-312, and Ile-334 each bind UDP-N-acetyl-alpha-D-glucosamine.

This sequence belongs to the EPSP synthase family. MurA subfamily.

The protein resides in the cytoplasm. The enzyme catalyses phosphoenolpyruvate + UDP-N-acetyl-alpha-D-glucosamine = UDP-N-acetyl-3-O-(1-carboxyvinyl)-alpha-D-glucosamine + phosphate. It functions in the pathway cell wall biogenesis; peptidoglycan biosynthesis. Functionally, cell wall formation. Adds enolpyruvyl to UDP-N-acetylglucosamine. The sequence is that of UDP-N-acetylglucosamine 1-carboxyvinyltransferase from Xanthomonas campestris pv. campestris (strain B100).